The following is a 387-amino-acid chain: Succinate--CoA ligase [ADP-forming] subunit beta (387 aa).

The 236-residue stretch at 9 to 244 (KAIFADNGIP…ITEENPAERE (236 aa)) folds into the ATP-grasp domain. ATP is bound by residues Lys-46, 53–55 (GRG), Glu-99, Ala-102, and Glu-107. 2 residues coordinate Mg(2+): Asn-199 and Asp-213. Substrate contacts are provided by residues Asn-264 and 321–323 (GIV).

It belongs to the succinate/malate CoA ligase beta subunit family. Heterotetramer of two alpha and two beta subunits. The cofactor is Mg(2+).

It catalyses the reaction succinate + ATP + CoA = succinyl-CoA + ADP + phosphate. The enzyme catalyses GTP + succinate + CoA = succinyl-CoA + GDP + phosphate. It participates in carbohydrate metabolism; tricarboxylic acid cycle; succinate from succinyl-CoA (ligase route): step 1/1. Functionally, succinyl-CoA synthetase functions in the citric acid cycle (TCA), coupling the hydrolysis of succinyl-CoA to the synthesis of either ATP or GTP and thus represents the only step of substrate-level phosphorylation in the TCA. The beta subunit provides nucleotide specificity of the enzyme and binds the substrate succinate, while the binding sites for coenzyme A and phosphate are found in the alpha subunit. This is Succinate--CoA ligase [ADP-forming] subunit beta from Campylobacter jejuni subsp. jejuni serotype O:6 (strain 81116 / NCTC 11828).